Reading from the N-terminus, the 416-residue chain is Gamma-glutamyl phosphate reductase (416 aa).

Belongs to the gamma-glutamyl phosphate reductase family.

The protein resides in the cytoplasm. The enzyme catalyses L-glutamate 5-semialdehyde + phosphate + NADP(+) = L-glutamyl 5-phosphate + NADPH + H(+). The protein operates within amino-acid biosynthesis; L-proline biosynthesis; L-glutamate 5-semialdehyde from L-glutamate: step 2/2. In terms of biological role, catalyzes the NADPH-dependent reduction of L-glutamate 5-phosphate into L-glutamate 5-semialdehyde and phosphate. The product spontaneously undergoes cyclization to form 1-pyrroline-5-carboxylate. The sequence is that of Gamma-glutamyl phosphate reductase from Petrotoga mobilis (strain DSM 10674 / SJ95).